Here is a 264-residue protein sequence, read N- to C-terminus: Thiazole synthase (264 aa).

The active-site Schiff-base intermediate with DXP is Lys-98. Residues Gly-159, 185-186 (AG), and 207-208 (AT) contribute to the 1-deoxy-D-xylulose 5-phosphate site.

This sequence belongs to the ThiG family. In terms of assembly, homotetramer. Forms heterodimers with either ThiH or ThiS.

The protein localises to the cytoplasm. The enzyme catalyses [ThiS sulfur-carrier protein]-C-terminal-Gly-aminoethanethioate + 2-iminoacetate + 1-deoxy-D-xylulose 5-phosphate = [ThiS sulfur-carrier protein]-C-terminal Gly-Gly + 2-[(2R,5Z)-2-carboxy-4-methylthiazol-5(2H)-ylidene]ethyl phosphate + 2 H2O + H(+). The protein operates within cofactor biosynthesis; thiamine diphosphate biosynthesis. Catalyzes the rearrangement of 1-deoxy-D-xylulose 5-phosphate (DXP) to produce the thiazole phosphate moiety of thiamine. Sulfur is provided by the thiocarboxylate moiety of the carrier protein ThiS. In vitro, sulfur can be provided by H(2)S. In Mycobacterium marinum (strain ATCC BAA-535 / M), this protein is Thiazole synthase.